A 377-amino-acid chain; its full sequence is uncharacterized protein (377 aa).

The first 22 residues, 1–22 (MKFKYGTVVLGSFLGLSVVLAA), serve as a signal peptide directing secretion. Cys23 carries the N-palmitoyl cysteine lipid modification. Cys23 is lipidated: S-diacylglycerol cysteine. Residues 217 to 260 (AKANGETNQKGRKAAKSNKTALVQLKNGADTTTNEENKDTKTSD) are disordered. Over residues 251 to 260 (EENKDTKTSD) the composition is skewed to basic and acidic residues.

The protein belongs to the MG185/MG260 family.

It is found in the cell membrane. This is an uncharacterized protein from Mycoplasma pneumoniae (strain ATCC 29342 / M129 / Subtype 1) (Mycoplasmoides pneumoniae).